The sequence spans 850 residues: Vacuolar membrane protease (850 aa).

Residues 1 to 20 (MASSRAQWFNPIAFTPWPVT) are Cytoplasmic-facing. A helical transmembrane segment spans residues 21–41 (CITTIVYLALLIPILVINLVV). The Vacuolar portion of the chain corresponds to 42-282 (PSAPETNPKG…DGKSKDQNKV (241 aa)). N-linked (GlcNAc...) asparagine glycosylation is found at Asn53, Asn116, and Asn119. Residues His175 and Asp187 each coordinate Zn(2+). Catalysis depends on Glu221, which acts as the Proton acceptor. Glu222 contributes to the Zn(2+) binding site. A helical membrane pass occupies residues 283–303 (NSGTGTLGVWFDMFGTAFAVF). The Cytoplasmic portion of the chain corresponds to 304–308 (RLHTL). A helical transmembrane segment spans residues 309 to 329 (FAISVALLVIAPLVIFVTSVI). The Vacuolar segment spans residues 330 to 363 (LSKTDRMYLFSMSKSLEGTGDQVSLRGLRGFSRT). Residues 364–384 (PIILVIATTIPICLAYLLEKV) traverse the membrane as a helical segment. The Cytoplasmic portion of the chain corresponds to 385–393 (NPYIVHSSQ). Residues 394-414 (FSVWSMMFSAWIFLAWFLACA) form a helical membrane-spanning segment. Topologically, residues 415 to 425 (ADFFRPSALHR) are vacuolar. A helical membrane pass occupies residues 426 to 446 (AYSYTWIFIATWIMLVINTVY). At 447–529 (ANQKGIAAGP…TLPRWTWVLQ (83 aa)) the chain is on the cytoplasmic side. The chain crosses the membrane as a helical span at residues 530–550 (LLLLAPIVLILVGQLALFLTA). The Vacuolar portion of the chain corresponds to 551–563 (SMCQVGSDGVSTF). Residues 564-584 (VVYLACSVFTTLLCIPLFPLI) form a helical membrane-spanning segment. At 585–590 (HRFTYH) the chain is on the cytoplasmic side. Residues 591–611 (IPTFLFLVFIGTLIYNLVAFP) traverse the membrane as a helical segment. Over 612–850 (FSPANRLKTF…VEASHSFTIQ (239 aa)) the chain is Vacuolar. Asn630, Asn658, and Asn702 each carry an N-linked (GlcNAc...) asparagine glycan.

It belongs to the peptidase M28 family. Zn(2+) is required as a cofactor.

It localises to the vacuole membrane. May be involved in vacuolar sorting and osmoregulation. The chain is Vacuolar membrane protease from Ajellomyces capsulatus (strain NAm1 / WU24) (Darling's disease fungus).